The following is a 351-amino-acid chain: uncharacterized protein (351 aa).

This sequence belongs to the glycosyltransferase group 1 family. Glycosyltransferase 4 subfamily.

This is an uncharacterized protein from Methanocaldococcus jannaschii (strain ATCC 43067 / DSM 2661 / JAL-1 / JCM 10045 / NBRC 100440) (Methanococcus jannaschii).